The primary structure comprises 247 residues: Uridylate kinase (247 aa).

Position 18–21 (18–21 (KLSG)) interacts with ATP. Gly60 contributes to the UMP binding site. ATP is bound by residues Gly61 and Arg65. Residues Asp80 and 141–148 (TGNPFFTT) contribute to the UMP site. Positions 168, 174, and 177 each coordinate ATP.

This sequence belongs to the UMP kinase family. In terms of assembly, homohexamer.

The protein resides in the cytoplasm. The enzyme catalyses UMP + ATP = UDP + ADP. Its pathway is pyrimidine metabolism; CTP biosynthesis via de novo pathway; UDP from UMP (UMPK route): step 1/1. Its activity is regulated as follows. Inhibited by UTP. In terms of biological role, catalyzes the reversible phosphorylation of UMP to UDP. The chain is Uridylate kinase from Pseudomonas putida (strain ATCC 47054 / DSM 6125 / CFBP 8728 / NCIMB 11950 / KT2440).